A 181-amino-acid polypeptide reads, in one-letter code: Oligoribonuclease (181 aa).

The Exonuclease domain occupies 8-171 (LIWIDLEMTG…DDIRESVAEL (164 aa)). Tyrosine 129 is a catalytic residue.

This sequence belongs to the oligoribonuclease family.

It localises to the cytoplasm. Its function is as follows. 3'-to-5' exoribonuclease specific for small oligoribonucleotides. In Klebsiella pneumoniae subsp. pneumoniae (strain ATCC 700721 / MGH 78578), this protein is Oligoribonuclease.